We begin with the raw amino-acid sequence, 654 residues long: Probable Xaa-Pro aminopeptidase P (654 aa).

Mn(2+)-binding residues include Asp449, Asp460, Glu558, and Glu572.

Belongs to the peptidase M24B family. The cofactor is Mn(2+).

The catalysed reaction is Release of any N-terminal amino acid, including proline, that is linked to proline, even from a dipeptide or tripeptide.. Catalyzes the removal of a penultimate prolyl residue from the N-termini of peptides. The polypeptide is Probable Xaa-Pro aminopeptidase P (ampp) (Aspergillus fumigatus (strain CBS 144.89 / FGSC A1163 / CEA10) (Neosartorya fumigata)).